The chain runs to 578 residues: Arginine--tRNA ligase (578 aa).

The short motif at 123–133 is the 'HIGH' region element; the sequence is PNLAKEMHVGH.

This sequence belongs to the class-I aminoacyl-tRNA synthetase family. Monomer.

It is found in the cytoplasm. It carries out the reaction tRNA(Arg) + L-arginine + ATP = L-arginyl-tRNA(Arg) + AMP + diphosphate. The chain is Arginine--tRNA ligase from Hahella chejuensis (strain KCTC 2396).